The chain runs to 807 residues: Glycerol-3-phosphate acyltransferase (807 aa).

The short motif at 308–313 is the HXXXXD motif element; the sequence is CHRSHM.

This sequence belongs to the GPAT/DAPAT family.

It is found in the cell inner membrane. It catalyses the reaction sn-glycerol 3-phosphate + an acyl-CoA = a 1-acyl-sn-glycero-3-phosphate + CoA. It functions in the pathway phospholipid metabolism; CDP-diacylglycerol biosynthesis; CDP-diacylglycerol from sn-glycerol 3-phosphate: step 1/3. The polypeptide is Glycerol-3-phosphate acyltransferase (Shewanella sp. (strain MR-7)).